A 266-amino-acid chain; its full sequence is Glucosamine-6-phosphate deaminase (266 aa).

The Proton acceptor; for enolization step role is filled by aspartate 72. Aspartate 141 (for ring-opening step) is an active-site residue. Catalysis depends on histidine 143, which acts as the Proton acceptor; for ring-opening step. The active-site For ring-opening step is glutamate 148.

The protein belongs to the glucosamine/galactosamine-6-phosphate isomerase family. NagB subfamily. In terms of assembly, homohexamer.

The catalysed reaction is alpha-D-glucosamine 6-phosphate + H2O = beta-D-fructose 6-phosphate + NH4(+). It participates in amino-sugar metabolism; N-acetylneuraminate degradation; D-fructose 6-phosphate from N-acetylneuraminate: step 5/5. Allosterically activated by N-acetylglucosamine 6-phosphate (GlcNAc6P). Its function is as follows. Catalyzes the reversible isomerization-deamination of glucosamine 6-phosphate (GlcN6P) to form fructose 6-phosphate (Fru6P) and ammonium ion. The polypeptide is Glucosamine-6-phosphate deaminase (Cronobacter sakazakii (strain ATCC BAA-894) (Enterobacter sakazakii)).